We begin with the raw amino-acid sequence, 406 residues long: Dual-specificity RNA methyltransferase RlmN (406 aa).

E119 (proton acceptor) is an active-site residue. One can recognise a Radical SAM core domain in the interval 125-370 (DKGRGTLCVS…AMVRRTRGDD (246 aa)). C132 and C375 are disulfide-bonded. Residues C139, C143, and C146 each contribute to the [4Fe-4S] cluster site. S-adenosyl-L-methionine-binding positions include 192 to 193 (GE), S224, 246 to 248 (SLH), and N332. The active-site S-methylcysteine intermediate is C375.

The protein belongs to the radical SAM superfamily. RlmN family. [4Fe-4S] cluster serves as cofactor.

It localises to the cytoplasm. It catalyses the reaction adenosine(2503) in 23S rRNA + 2 reduced [2Fe-2S]-[ferredoxin] + 2 S-adenosyl-L-methionine = 2-methyladenosine(2503) in 23S rRNA + 5'-deoxyadenosine + L-methionine + 2 oxidized [2Fe-2S]-[ferredoxin] + S-adenosyl-L-homocysteine. The enzyme catalyses adenosine(37) in tRNA + 2 reduced [2Fe-2S]-[ferredoxin] + 2 S-adenosyl-L-methionine = 2-methyladenosine(37) in tRNA + 5'-deoxyadenosine + L-methionine + 2 oxidized [2Fe-2S]-[ferredoxin] + S-adenosyl-L-homocysteine. In terms of biological role, specifically methylates position 2 of adenine 2503 in 23S rRNA and position 2 of adenine 37 in tRNAs. m2A2503 modification seems to play a crucial role in the proofreading step occurring at the peptidyl transferase center and thus would serve to optimize ribosomal fidelity. The protein is Dual-specificity RNA methyltransferase RlmN of Xylella fastidiosa (strain M12).